The primary structure comprises 35 residues: Photosystem II reaction center protein M (35 aa).

The chain crosses the membrane as a helical span at residues Ile5–Leu25.

It belongs to the PsbM family. As to quaternary structure, PSII is composed of 1 copy each of membrane proteins PsbA, PsbB, PsbC, PsbD, PsbE, PsbF, PsbH, PsbI, PsbJ, PsbK, PsbL, PsbM, PsbT, PsbX, PsbY, PsbZ, Psb30/Ycf12, at least 3 peripheral proteins of the oxygen-evolving complex and a large number of cofactors. It forms dimeric complexes.

The protein localises to the plastid. Its subcellular location is the chloroplast thylakoid membrane. One of the components of the core complex of photosystem II (PSII). PSII is a light-driven water:plastoquinone oxidoreductase that uses light energy to abstract electrons from H(2)O, generating O(2) and a proton gradient subsequently used for ATP formation. It consists of a core antenna complex that captures photons, and an electron transfer chain that converts photonic excitation into a charge separation. This subunit is found at the monomer-monomer interface. This is Photosystem II reaction center protein M from Chara vulgaris (Common stonewort).